Here is a 187-residue protein sequence, read N- to C-terminus: Orotate phosphoribosyltransferase (187 aa).

5-phospho-alpha-D-ribose 1-diphosphate contacts are provided by residues Arg-98, Lys-99, Lys-102, His-104, and 128 to 136; that span reads EDVTTTGGS. The orotate site is built by Thr-132 and Arg-160.

Belongs to the purine/pyrimidine phosphoribosyltransferase family. PyrE subfamily. In terms of assembly, homodimer. It depends on Mg(2+) as a cofactor.

It carries out the reaction orotidine 5'-phosphate + diphosphate = orotate + 5-phospho-alpha-D-ribose 1-diphosphate. It functions in the pathway pyrimidine metabolism; UMP biosynthesis via de novo pathway; UMP from orotate: step 1/2. In terms of biological role, catalyzes the transfer of a ribosyl phosphate group from 5-phosphoribose 1-diphosphate to orotate, leading to the formation of orotidine monophosphate (OMP). The sequence is that of Orotate phosphoribosyltransferase from Rhodopseudomonas palustris (strain ATCC BAA-98 / CGA009).